Here is a 72-residue protein sequence, read N- to C-terminus: Male-specific sperm protein Mst84Dd (72 aa).

This sequence belongs to the MST(3)CGP family. Testis.

The chain is Male-specific sperm protein Mst84Dd (Mst84Dd) from Drosophila melanogaster (Fruit fly).